A 200-amino-acid chain; its full sequence is UPF0301 protein BOV_0485 (200 aa).

Belongs to the UPF0301 (AlgH) family.

The protein is UPF0301 protein BOV_0485 of Brucella ovis (strain ATCC 25840 / 63/290 / NCTC 10512).